A 336-amino-acid polypeptide reads, in one-letter code: PTS system glucitol/sorbitol-specific EIIB component (336 aa).

The region spanning 3 to 195 is the PTS EIIB type-5 domain; sequence KYNAIKIVKG…AVQSMITTIL (193 aa). The active-site Phosphocysteine intermediate; for EIIB activity is the C75. C75 carries the post-translational modification Phosphocysteine; by EIIA. 5 consecutive transmembrane segments (helical) span residues 194 to 214, 228 to 248, 250 to 270, 278 to 298, and 312 to 332; these read ILPFMAFVAMLIGIIQGSGFG, GIGLMILGFICSIPLLSALLG, GAVIAQIVGTLIGVEIGKGTI, ALFAINTQCACDFIPVGLGLA, and VLYSRFMIGVPRVAVAWVASI.

The protein localises to the cell membrane. The enzyme catalyses D-sorbitol(out) + N(pros)-phospho-L-histidyl-[protein] = D-sorbitol 6-phosphate(in) + L-histidyl-[protein]. Its function is as follows. The phosphoenolpyruvate-dependent sugar phosphotransferase system (sugar PTS), a major carbohydrate active transport system, catalyzes the phosphorylation of incoming sugar substrates concomitantly with their translocation across the cell membrane. The enzyme II complex composed of SrlA, SrlB and SrlE is involved in glucitol/sorbitol transport. The chain is PTS system glucitol/sorbitol-specific EIIB component (srlE) from Clostridium beijerinckii (strain ATCC 51743 / NCIMB 8052) (Clostridium acetobutylicum).